Reading from the N-terminus, the 342-residue chain is GTPase Obg (342 aa).

Residues Met-1–Ile-159 enclose the Obg domain. One can recognise an OBG-type G domain in the interval Ala-160–Asp-327. Residues Gly-166–Ser-173, Phe-191–Val-195, Asp-212–Gly-215, Asn-279–Asp-282, and Ser-308–Val-310 contribute to the GTP site. Residues Ser-173 and Thr-193 each contribute to the Mg(2+) site.

The protein belongs to the TRAFAC class OBG-HflX-like GTPase superfamily. OBG GTPase family. As to quaternary structure, monomer. Requires Mg(2+) as cofactor.

The protein localises to the cytoplasm. An essential GTPase which binds GTP, GDP and possibly (p)ppGpp with moderate affinity, with high nucleotide exchange rates and a fairly low GTP hydrolysis rate. Plays a role in control of the cell cycle, stress response, ribosome biogenesis and in those bacteria that undergo differentiation, in morphogenesis control. The chain is GTPase Obg from Cereibacter sphaeroides (strain ATCC 17029 / ATH 2.4.9) (Rhodobacter sphaeroides).